Reading from the N-terminus, the 345-residue chain is SLAM family member 5 (345 aa).

The N-terminal stretch at 1-21 (MAQHHLWILLLCLQTWPEAAG) is a signal peptide. The Extracellular portion of the chain corresponds to 22 to 225 (KDSEIFTVNG…AMGFRTHHTG (204 aa)). The Ig-like V-type domain maps to 26–129 (IFTVNGILGE…TTKRYNLQIY (104 aa)). Residues 135–207 (PKITQSLMAS…PVSNNSDSIS (73 aa)) enclose the Ig-like C2-type domain. The N-linked (GlcNAc...) asparagine glycan is linked to N150. An intrachain disulfide couples C155 to C193. A helical membrane pass occupies residues 226–246 (LLSVLAMFFLLVLILSSVFLF). Topologically, residues 247–345 (RLFKRRQGRI…PGTSSYEIVI (99 aa)) are cytoplasmic. The short motif at 277–282 (TIYTYI) is the ITSM 1 element. At Y279 the chain carries Phosphotyrosine. Y296 is modified (phosphotyrosine; by LYN). An ITSM 2 motif is present at residues 314-319 (TVYSEV). Y316 carries the phosphotyrosine modification. Positions 326-345 (GKASTQDSKPPGTSSYEIVI) are disordered. The segment covering 328–345 (ASTQDSKPPGTSSYEIVI) has biased composition (polar residues). Y341 carries the post-translational modification Phosphotyrosine; by FES.

Homodimer; via its extracellular domain. Forms a head to tail dimer with a CD48 molecule from another cell. Interacts with SH2 domain-containing proteins SH2D1A/SAP and SH2D1B/EAT-2. Interacts with tyrosine-protein phosphatases PTPN6/SHP-1 and PTPN11//SHP-2 via its phosphorylated cytoplasmic domain, and this interaction is blocked by SH2D1A. Interacts (via phosphorylated ITSM 1 and 2) with INPP5D/SHIP1. Phosphorylated by tyrosine-protein kinase LCK on tyrosine residues following ligation induced by agonist monoclonal antibody. The association with SH2D1A is dependent of tyrosine phosphorylation of its cytoplasmic domain. Phosphorylated on Tyr-296 and Tyr-316 following platelet aggregation. Phosphorylated on tyrosine residues upon high affinity immunoglobulin epsilon receptor aggregation in mast cells. In terms of processing, N-glycosylated. In terms of tissue distribution, predominantly expressed in hematopoietic tissues, such as lymph node, spleen and peripheral leukocytes. Expressed in macrophages, B-cells, monocytes, platelets, thymocytes, T-cells and dendritic cells. Highly expressed in memory T-cells. Expressed in mast cells.

It localises to the cell membrane. Functionally, self-ligand receptor of the signaling lymphocytic activation molecule (SLAM) family. SLAM receptors triggered by homo- or heterotypic cell-cell interactions are modulating the activation and differentiation of a wide variety of immune cells and thus are involved in the regulation and interconnection of both innate and adaptive immune response. Activities are controlled by presence or absence of small cytoplasmic adapter proteins, SH2D1A/SAP and/or SH2D1B/EAT-2. Can mediate natural killer (NK) cell cytotoxicity dependent on SH2D1A and SH2D1B. Increases proliferative responses of activated T-cells and SH2D1A/SAP does not seem be required for this process. Homophilic interactions enhance interferon gamma/IFNG secretion in lymphocytes and induce platelet stimulation via a SH2D1A-dependent pathway. May serve as a marker for hematopoietic progenitor cells Required for a prolonged T-cell:B-cell contact, optimal T follicular helper function, and germinal center formation. In germinal centers involved in maintaining B-cell tolerance and in preventing autoimmunity. In mast cells negatively regulates high affinity immunoglobulin epsilon receptor signaling; independent of SH2D1A and SH2D1B but implicating FES and PTPN6/SHP-1. In macrophages enhances LPS-induced MAPK phosphorylation and NF-kappaB activation and modulates LPS-induced cytokine secretion; involving ITSM 2. Positively regulates macroautophagy in primary dendritic cells via stabilization of IRF8; inhibits TRIM21-mediated proteasomal degradation of IRF8. This Homo sapiens (Human) protein is SLAM family member 5 (CD84).